The chain runs to 170 residues: Probable deoxyuridine 5'-triphosphate nucleotidohydrolase (170 aa).

This sequence belongs to the dCTP deaminase family. Archaeal dUTPase subfamily.

The enzyme catalyses dUTP + H2O = dUMP + diphosphate + H(+). It participates in pyrimidine metabolism; dUMP biosynthesis; dUMP from dCTP (dUTP route): step 2/2. This enzyme is involved in nucleotide metabolism: it produces dUMP, the immediate precursor of thymidine nucleotides and it decreases the intracellular concentration of dUTP so that uracil cannot be incorporated into DNA. In Methanococcoides burtonii (strain DSM 6242 / NBRC 107633 / OCM 468 / ACE-M), this protein is Probable deoxyuridine 5'-triphosphate nucleotidohydrolase.